A 184-amino-acid polypeptide reads, in one-letter code: MSSPSKRREMDLMKLMMSDYKVDMINDGMHEFFVHFHGPKDSIYQGGVWKVRVELTEAYPYKSPSIGFTNKIYHPNVDEMSGSVCLDVINQTWSPMFDLVNIFEVFLPQLLLYPNPSDPLNGEAASLMMRDKNAYENKVKEYCERYAKPEDISPEEEEEESDEELSDAEGYDSGDEAIMGHADP.

One can recognise a UBC core domain in the interval Met1–Lys148. Cys85 (glycyl thioester intermediate) is an active-site residue. A disordered region spans residues Tyr146–Pro184. Positions Ile152–Asp175 are enriched in acidic residues.

It belongs to the ubiquitin-conjugating enzyme family.

It catalyses the reaction S-ubiquitinyl-[E1 ubiquitin-activating enzyme]-L-cysteine + [E2 ubiquitin-conjugating enzyme]-L-cysteine = [E1 ubiquitin-activating enzyme]-L-cysteine + S-ubiquitinyl-[E2 ubiquitin-conjugating enzyme]-L-cysteine.. The protein operates within protein modification; protein ubiquitination. Its function is as follows. Catalyzes the covalent attachment of ubiquitin to other proteins. This chain is Ubiquitin-conjugating enzyme E2-23 kDa (UBC4), found in Triticum aestivum (Wheat).